Consider the following 411-residue polypeptide: Arginine deiminase (411 aa).

The Amidino-cysteine intermediate role is filled by Cys-401.

This sequence belongs to the arginine deiminase family.

The protein localises to the cytoplasm. The enzyme catalyses L-arginine + H2O = L-citrulline + NH4(+). It functions in the pathway amino-acid degradation; L-arginine degradation via ADI pathway; carbamoyl phosphate from L-arginine: step 1/2. In Staphylococcus aureus (strain JH9), this protein is Arginine deiminase.